Reading from the N-terminus, the 517-residue chain is ATP synthase subunit alpha 1 (517 aa).

174 to 181 (GDRQTGKT) lines the ATP pocket.

This sequence belongs to the ATPase alpha/beta chains family. As to quaternary structure, F-type ATPases have 2 components, CF(1) - the catalytic core - and CF(0) - the membrane proton channel. CF(1) has five subunits: alpha(3), beta(3), gamma(1), delta(1), epsilon(1). CF(0) has three main subunits: a(1), b(2) and c(9-12). The alpha and beta chains form an alternating ring which encloses part of the gamma chain. CF(1) is attached to CF(0) by a central stalk formed by the gamma and epsilon chains, while a peripheral stalk is formed by the delta and b chains.

Its subcellular location is the cell inner membrane. It catalyses the reaction ATP + H2O + 4 H(+)(in) = ADP + phosphate + 5 H(+)(out). Its function is as follows. Produces ATP from ADP in the presence of a proton gradient across the membrane. The alpha chain is a regulatory subunit. The sequence is that of ATP synthase subunit alpha 1 from Polaromonas naphthalenivorans (strain CJ2).